A 1935-amino-acid polypeptide reads, in one-letter code: Myosin-7 (1935 aa).

Positions Asp32 to Pro81 constitute a Myosin N-terminal SH3-like domain. In terms of domain architecture, Myosin motor spans Asp85 to Asp778. An N6,N6,N6-trimethyllysine modification is found at Lys129. Gly178–Thr185 contributes to the ATP binding site. Phosphothreonine is present on Thr378. Actin-binding regions lie at residues Leu655–Glu677 and Arg757–Gly771. Residues Leu781–Ser810 enclose the IQ domain. The stretch at Leu839–Glu1935 forms a coiled coil. A phosphoserine mark is found at Ser1137 and Ser1269. Thr1282 is modified (phosphothreonine). Tyr1308 carries the post-translational modification Phosphotyrosine. Phosphothreonine is present on Thr1309. Ser1510 is subject to Phosphoserine. Thr1513 is subject to Phosphothreonine. The interval Glu1907 to Glu1935 is disordered. The segment covering Lys1923–Glu1935 has biased composition (basic and acidic residues).

Belongs to the TRAFAC class myosin-kinesin ATPase superfamily. Myosin family. In terms of assembly, muscle myosin is a hexameric protein that consists of 2 heavy chain subunits (MHC), 2 alkali light chain subunits (MLC) and 2 regulatory light chain subunits (MLC-2). Interacts with ECPAS. Interacts (via C-terminus) with LRRC39.

Its subcellular location is the cytoplasm. The protein localises to the myofibril. It localises to the sarcomere. Myosins are actin-based motor molecules with ATPase activity essential for muscle contraction. Forms regular bipolar thick filaments that, together with actin thin filaments, constitute the fundamental contractile unit of skeletal and cardiac muscle. The sequence is that of Myosin-7 (MYH7) from Equus caballus (Horse).